The following is a 407-amino-acid chain: Probable tRNA sulfurtransferase (407 aa).

The THUMP domain occupies 61–165 (NEITYRLSKI…LDAIYMYEEV (105 aa)). ATP is bound by residues 183–184 (ML), 208–209 (HF), R265, G287, and Q296.

Belongs to the ThiI family.

It localises to the cytoplasm. It carries out the reaction [ThiI sulfur-carrier protein]-S-sulfanyl-L-cysteine + a uridine in tRNA + 2 reduced [2Fe-2S]-[ferredoxin] + ATP + H(+) = [ThiI sulfur-carrier protein]-L-cysteine + a 4-thiouridine in tRNA + 2 oxidized [2Fe-2S]-[ferredoxin] + AMP + diphosphate. The catalysed reaction is [ThiS sulfur-carrier protein]-C-terminal Gly-Gly-AMP + S-sulfanyl-L-cysteinyl-[cysteine desulfurase] + AH2 = [ThiS sulfur-carrier protein]-C-terminal-Gly-aminoethanethioate + L-cysteinyl-[cysteine desulfurase] + A + AMP + 2 H(+). It participates in cofactor biosynthesis; thiamine diphosphate biosynthesis. In terms of biological role, catalyzes the ATP-dependent transfer of a sulfur to tRNA to produce 4-thiouridine in position 8 of tRNAs, which functions as a near-UV photosensor. Also catalyzes the transfer of sulfur to the sulfur carrier protein ThiS, forming ThiS-thiocarboxylate. This is a step in the synthesis of thiazole, in the thiamine biosynthesis pathway. The sulfur is donated as persulfide by IscS. This Staphylococcus aureus (strain NCTC 8325 / PS 47) protein is Probable tRNA sulfurtransferase.